The primary structure comprises 458 residues: Hepatocyte nuclear factor 3-beta (458 aa).

Residues 14–93 (DWSSYYAEPE…AGAMAGMSGS (80 aa)) form a transactivation domain 1 region. The short motif at 106 to 113 (LSPSLSPL) is the Nuclear localization signal element. Thr-156 carries the post-translational modification Phosphothreonine; by PKB/AKT1. A DNA-binding region (fork-head) is located at residues 159 to 252 (KPPYSYISLI…ENGCYLRRQK (94 aa)). Residues Ser-212 and Ser-283 each carry the phosphoserine modification. A disordered region spans residues 286–365 (QLGEAAGSAS…PGLPPEAHLK (80 aa)). The segment covering 294 to 310 (ASETPAGTESPHSSASP) has biased composition (polar residues). Thr-301 is modified (phosphothreonine). Phosphoserine is present on residues Ser-303, Ser-306, Ser-307, and Ser-309. Residues 339–352 (PGQQQQAAAHLLGP) are compositionally biased toward low complexity. A transactivation domain 2 region spans residues 361-458 (EAHLKPEHHY…VYSRPIMNSS (98 aa)). Phosphoserine is present on residues Ser-437 and Ser-458.

As to quaternary structure, binds DNA as a monomer. Binds TLE1. Interacts with FOXA1 and FOXA3. Interacts with PRKDC. Interacts with AKT1. Interacts with TET1; this interaction may recruit TET1 to specific genomic loci to mediate their demethylation. Post-translationally, phosphorylation on Thr-156 abolishes binding to target promoters and subsequent transcription activation upon insulin stimulation. As to expression, liver.

The protein localises to the nucleus. It is found in the cytoplasm. Functionally, transcription factor that is involved in embryonic development, establishment of tissue-specific gene expression and regulation of gene expression in differentiated tissues. Is thought to act as a 'pioneer' factor opening the compacted chromatin for other proteins through interactions with nucleosomal core histones and thereby replacing linker histones at target enhancer and/or promoter sites. Binds DNA with the consensus sequence 5'-[AC]A[AT]T[AG]TT[GT][AG][CT]T[CT]-3'. In embryonic development is required for notochord formation. Involved in the development of multiple endoderm-derived organ systems such as the liver, pancreas and lungs; FOXA1 and FOXA2 seem to have at least in part redundant roles. Originally described as a transcription activator for a number of liver genes such as AFP, albumin, tyrosine aminotransferase, PEPCK, etc. Interacts with the cis-acting regulatory regions of these genes. Involved in glucose homeostasis; regulates the expression of genes important for glucose sensing in pancreatic beta-cells and glucose homeostasis. Involved in regulation of fat metabolism. Acts synergistically with ONECUT1 to activate transcription of female-specific CYP2C12; the function is inhibited by growth hormone-activated STAT5B. Acts synergistically with HNF4A to activate transcription of APOA1. This chain is Hepatocyte nuclear factor 3-beta (Foxa2), found in Rattus norvegicus (Rat).